The following is a 30-amino-acid chain: GIPCGESCVFIPCISTVIGCSCKNKVCYRN.

Positions 1–30 form a cross-link, cyclopeptide (Gly-Asn); sequence GIPCGESCVFIPCISTVIGCSCKNKVCYRN. 3 disulfides stabilise this stretch: Cys-4-Cys-20, Cys-8-Cys-22, and Cys-13-Cys-27.

This is a cyclic peptide.

The protein resides in the secreted. Its function is as follows. Probably participates in a plant defense mechanism. In Clitoria ternatea (Butterfly pea), this protein is Cyclotide cter-Q.